The following is a 508-amino-acid chain: Photosystem II CP47 reaction center protein (508 aa).

6 helical membrane passes run 21 to 36, 101 to 115, 140 to 156, 203 to 218, 237 to 252, and 457 to 472; these read SVHI…WAGS, IVFS…IWHW, GIHL…FGAF, IAAG…FHLS, VLSS…AFVV, and TFAL…HGAR.

It belongs to the PsbB/PsbC family. PsbB subfamily. PSII is composed of 1 copy each of membrane proteins PsbA, PsbB, PsbC, PsbD, PsbE, PsbF, PsbH, PsbI, PsbJ, PsbK, PsbL, PsbM, PsbT, PsbX, PsbY, PsbZ, Psb30/Ycf12, at least 3 peripheral proteins of the oxygen-evolving complex and a large number of cofactors. It forms dimeric complexes. The cofactor is Binds multiple chlorophylls. PSII binds additional chlorophylls, carotenoids and specific lipids..

It localises to the plastid. It is found in the chloroplast thylakoid membrane. One of the components of the core complex of photosystem II (PSII). It binds chlorophyll and helps catalyze the primary light-induced photochemical processes of PSII. PSII is a light-driven water:plastoquinone oxidoreductase, using light energy to abstract electrons from H(2)O, generating O(2) and a proton gradient subsequently used for ATP formation. This Zea mays (Maize) protein is Photosystem II CP47 reaction center protein.